The primary structure comprises 354 residues: NAD-dependent protein deacetylase hst2-2 (354 aa).

In terms of domain architecture, Deacetylase sirtuin-type spans Gln16–Asp279. NAD(+) contacts are provided by residues Gly43–Tyr63 and Gln126–Asp129. His146 functions as the Proton acceptor in the catalytic mechanism. Zn(2+) contacts are provided by Cys154, Cys157, Cys178, and Cys183. NAD(+)-binding positions include Gly220–Ser222, Asn245–Glu247, and Cys265.

This sequence belongs to the sirtuin family. Class I subfamily. The cofactor is Zn(2+).

It is found in the nucleus. The enzyme catalyses N(6)-acetyl-L-lysyl-[protein] + NAD(+) + H2O = 2''-O-acetyl-ADP-D-ribose + nicotinamide + L-lysyl-[protein]. Its function is as follows. NAD-dependent histone deacetylase, which could function in telomeric silencing, cell cycle progression and chromosome stability. The protein is NAD-dependent protein deacetylase hst2-2 of Emericella nidulans (strain FGSC A4 / ATCC 38163 / CBS 112.46 / NRRL 194 / M139) (Aspergillus nidulans).